The primary structure comprises 374 residues: Erythronate-4-phosphate dehydrogenase (374 aa).

Residues S53 and T75 each coordinate substrate. Position 160 (D160) interacts with NAD(+). R222 is an active-site residue. Residue D246 participates in NAD(+) binding. E251 is a catalytic residue. The Proton donor role is filled by H268. G271 lines the NAD(+) pocket. Y272 lines the substrate pocket.

It belongs to the D-isomer specific 2-hydroxyacid dehydrogenase family. PdxB subfamily. As to quaternary structure, homodimer.

The protein localises to the cytoplasm. It carries out the reaction 4-phospho-D-erythronate + NAD(+) = (R)-3-hydroxy-2-oxo-4-phosphooxybutanoate + NADH + H(+). The protein operates within cofactor biosynthesis; pyridoxine 5'-phosphate biosynthesis; pyridoxine 5'-phosphate from D-erythrose 4-phosphate: step 2/5. Catalyzes the oxidation of erythronate-4-phosphate to 3-hydroxy-2-oxo-4-phosphonooxybutanoate. The protein is Erythronate-4-phosphate dehydrogenase of Psychrobacter sp. (strain PRwf-1).